A 656-amino-acid polypeptide reads, in one-letter code: Nuclear pore complex protein Nup85 (656 aa).

Met-1 bears the N-acetylmethionine mark. N6-acetyllysine is present on Lys-92. The residue at position 223 (Ser-223) is a Phosphoserine.

It belongs to the nucleoporin Nup85 family. As to quaternary structure, component of the nuclear pore complex (NPC). Component of the NPC Nup107-160 subcomplex, consisting of at least NUP107, NUP98/Nup96, NUP160, NUP133, NUP85, NUP37, NUP43 and SEC13. Interacts with NUP160, NUP133 and SEC13. Interacts with NUP37, NUP107 and NUP43. Interacts with CCR2.

The protein localises to the nucleus. It localises to the nuclear pore complex. The protein resides in the chromosome. It is found in the centromere. Its subcellular location is the kinetochore. The protein localises to the cytoplasm. It localises to the cytoskeleton. The protein resides in the spindle. It is found in the nucleus membrane. Functionally, essential component of the nuclear pore complex (NPC) that seems to be required for NPC assembly and maintenance. As part of the NPC Nup107-160 subcomplex plays a role in RNA export and in tethering NUP96/Nup98 and NUP153 to the nucleus. The Nup107-160 complex seems to be required for spindle assembly during mitosis. NUP85 is required for membrane clustering of CCL2-activated CCR2. Seems to be involved in CCR2-mediated chemotaxis of monocytes and may link activated CCR2 to the phosphatidyl-inositol 3-kinase-Rac-lammellipodium protrusion cascade. Involved in nephrogenesis. The chain is Nuclear pore complex protein Nup85 (NUP85) from Homo sapiens (Human).